A 509-amino-acid chain; its full sequence is L-arabinose isomerase (509 aa).

Glutamate 313, glutamate 340, histidine 357, and histidine 456 together coordinate Mn(2+).

It belongs to the arabinose isomerase family. Requires Mn(2+) as cofactor.

The enzyme catalyses beta-L-arabinopyranose = L-ribulose. It participates in carbohydrate degradation; L-arabinose degradation via L-ribulose; D-xylulose 5-phosphate from L-arabinose (bacterial route): step 1/3. Functionally, catalyzes the conversion of L-arabinose to L-ribulose. This chain is L-arabinose isomerase, found in Phocaeicola vulgatus (strain ATCC 8482 / DSM 1447 / JCM 5826 / CCUG 4940 / NBRC 14291 / NCTC 11154) (Bacteroides vulgatus).